We begin with the raw amino-acid sequence, 430 residues long: Ribosomal protein uS12 methylthiotransferase RimO (430 aa).

Residues 2 to 119 enclose the MTTase N-terminal domain; sequence ISVYSISLGC…WPEMIGRALG (118 aa). Positions 11, 46, 81, 145, 149, and 152 each coordinate [4Fe-4S] cluster. One can recognise a Radical SAM core domain in the interval 131–361; that stretch reads STGPSYAYLK…MEVQAEISEE (231 aa). In terms of domain architecture, TRAM spans 364-430; the sequence is EGFTGSDEDV…SRTYDLVALS (67 aa).

It belongs to the methylthiotransferase family. RimO subfamily. [4Fe-4S] cluster is required as a cofactor.

Its subcellular location is the cytoplasm. The enzyme catalyses L-aspartate(89)-[ribosomal protein uS12]-hydrogen + (sulfur carrier)-SH + AH2 + 2 S-adenosyl-L-methionine = 3-methylsulfanyl-L-aspartate(89)-[ribosomal protein uS12]-hydrogen + (sulfur carrier)-H + 5'-deoxyadenosine + L-methionine + A + S-adenosyl-L-homocysteine + 2 H(+). Its function is as follows. Catalyzes the methylthiolation of an aspartic acid residue of ribosomal protein uS12. The chain is Ribosomal protein uS12 methylthiotransferase RimO from Oleidesulfovibrio alaskensis (strain ATCC BAA-1058 / DSM 17464 / G20) (Desulfovibrio alaskensis).